Here is a 293-residue protein sequence, read N- to C-terminus: Small ribosomal subunit biogenesis GTPase RsgA (293 aa).

Positions 63–223 (KNELVRPPIA…VADTPGFSSL (161 aa)) constitute a CP-type G domain. GTP contacts are provided by residues 112 to 115 (SKMD) and 166 to 174 (GQSGVGKSS). 4 residues coordinate Zn(2+): Cys-247, Cys-252, His-254, and Cys-260.

Belongs to the TRAFAC class YlqF/YawG GTPase family. RsgA subfamily. Monomer. Associates with 30S ribosomal subunit, binds 16S rRNA. Zn(2+) serves as cofactor.

Its subcellular location is the cytoplasm. Functionally, one of several proteins that assist in the late maturation steps of the functional core of the 30S ribosomal subunit. Helps release RbfA from mature subunits. May play a role in the assembly of ribosomal proteins into the subunit. Circularly permuted GTPase that catalyzes slow GTP hydrolysis, GTPase activity is stimulated by the 30S ribosomal subunit. This chain is Small ribosomal subunit biogenesis GTPase RsgA, found in Bacillus cytotoxicus (strain DSM 22905 / CIP 110041 / 391-98 / NVH 391-98).